The sequence spans 470 residues: Nuclear receptor ROR-beta (470 aa).

Residues 18-93 (VIPCKICGDK…LGMSRDAVKF (76 aa)) constitute a DNA-binding region (nuclear receptor). 2 NR C4-type zinc fingers span residues 21–41 (CKICGDKSSGIHYGVITCEGC) and 57–81 (CPRQRNCLIDRTNRNRCQHCRLQKC). Over residues 104-117 (LYAEVQKHQQRLQE) the composition is skewed to basic and acidic residues. Positions 104 to 127 (LYAEVQKHQQRLQEQRQQQSGEAE) are disordered. Positions 222–460 (EIDRIAQNII…TLFPPLYKEL (239 aa)) constitute an NR LBD domain. Positions 456–461 (LYKELF) match the AF-2 motif.

This sequence belongs to the nuclear hormone receptor family. NR1 subfamily. In terms of assembly, monomer. Interacts with CRX. As to expression, expressed in inner and outer neuroblastic layer as well as in the ganglion cell layer of the developing retina. Expressed in bone marrow osteoprogenitor cells.

It localises to the nucleus. The protein resides in the nucleoplasm. Nuclear receptor that binds DNA as a monomer to ROR response elements (RORE) containing a single core motif half-site 5'-AGGTCA-3' preceded by a short A-T-rich sequence. Considered to have intrinsic transcriptional activity, have some natural ligands such as all-trans retinoic acid (ATRA) and other retinoids which act as inverse agonists repressing the transcriptional activity. Required for normal postnatal development of rod and cone photoreceptor cells. Modulates rod photoreceptors differentiation at least by inducing the transcription factor NRL-mediated pathway. In cone photoreceptor cells, regulates transcription of OPN1SW. Involved in the regulation of the period length and stability of the circadian rhythm. May control cytoarchitectural patterning of neocortical neurons during development. May act in a dose-dependent manner to regulate barrel formation upon innervation of layer IV neurons by thalamocortical axons. May play a role in the suppression of osteoblastic differentiation through the inhibition of RUNX2 transcriptional activity. Its function is as follows. Isoform 1 is critical for hindlimb motor control and for the differentiation of amacrine and horizontal cells in the retina. Regulates the expression of PTF1A synergistically with FOXN4. This Mus musculus (Mouse) protein is Nuclear receptor ROR-beta (Rorb).